A 198-amino-acid chain; its full sequence is NAD(P)H dehydrogenase (quinone) (198 aa).

Residues 4–189 (ILVLYYSMYG…AIARYQGEHV (186 aa)) enclose the Flavodoxin-like domain. FMN is bound by residues 10–15 (SMYGHI) and 78–80 (TRF). Y12 contacts NAD(+). Residue W98 coordinates substrate. Residues 113 to 118 (STGTGG) and H133 each bind FMN.

Belongs to the WrbA family. It depends on FMN as a cofactor.

The enzyme catalyses a quinone + NADH + H(+) = a quinol + NAD(+). The catalysed reaction is a quinone + NADPH + H(+) = a quinol + NADP(+). The chain is NAD(P)H dehydrogenase (quinone) from Klebsiella pneumoniae (strain 342).